Consider the following 127-residue polypeptide: Translation initiation factor 5A (127 aa).

Lys35 is modified (hypusine).

It belongs to the eIF-5A family.

It localises to the cytoplasm. Functionally, functions by promoting the formation of the first peptide bond. This chain is Translation initiation factor 5A (eIF5A), found in Methanothrix thermoacetophila (strain DSM 6194 / JCM 14653 / NBRC 101360 / PT) (Methanosaeta thermophila).